Reading from the N-terminus, the 2282-residue chain is Protein Ycf2 (2282 aa).

Residue 1635–1642 (GSIGTGRS) participates in ATP binding.

The protein belongs to the Ycf2 family.

It is found in the plastid. Its subcellular location is the chloroplast stroma. In terms of biological role, probable ATPase of unknown function. Its presence in a non-photosynthetic plant (Epifagus virginiana) and experiments in tobacco indicate that it has an essential function which is probably not related to photosynthesis. In Populus alba (White poplar), this protein is Protein Ycf2.